The primary structure comprises 111 residues: WAP four-disulfide core domain protein 12 (111 aa).

The signal sequence occupies residues 1 to 23 (MGSSSFLVLMVSLALVTLVAAEG). The WAP domain maps to 27-74 (GIEKAGVCPADNIRCFKSDPPQCHTDQDCLGERKCCYLHCGFKCVIPV). 4 disulfides stabilise this stretch: cysteine 34/cysteine 62, cysteine 41/cysteine 66, cysteine 49/cysteine 61, and cysteine 55/cysteine 70. Residues 80-111 (GGNKDEDVSGPCPEPGWEAKSPGSSSTGCPQK) are disordered. Positions 101 to 111 (PGSSSTGCPQK) are enriched in polar residues.

The protein localises to the secreted. In terms of biological role, antibacterial protein. Putative acid-stable proteinase inhibitor. This chain is WAP four-disulfide core domain protein 12 (WFDC12), found in Macaca mulatta (Rhesus macaque).